Consider the following 53-residue polypeptide: Small, acid-soluble spore protein K (53 aa).

Positions 1 to 53 (MRNKERNFPNQNNNKFEGEPRAKAEYASKRANGTTNTHPQERMHASGKRDDNF) are disordered. Composition is skewed to basic and acidic residues over residues 16 to 28 (FEGE…EYAS) and 39 to 53 (PQER…DDNF).

It belongs to the SspK family.

Its subcellular location is the spore core. This chain is Small, acid-soluble spore protein K, found in Geobacillus sp. (strain WCH70).